The chain runs to 138 residues: MRFSNNFKKAPYLLQALLNVCLFFLAIALSGLLISETWYIVQFVYKSLFNKVDSYYEMLGELLIFFMYFEFIALIIKYFKSDFHFPLRYFIYIGITAVIRLIIIDHDQAISTFWWAMAILAMICAFFIVNRRNSVVEH.

The next 4 helical transmembrane spans lie at 14 to 34, 56 to 76, 84 to 104, and 109 to 129; these read LQALLNVCLFFLAIALSGLLI, YEMLGELLIFFMYFEFIALII, HFPLRYFIYIGITAVIRLIII, and AISTFWWAMAILAMICAFFIV.

The protein belongs to the PsiE family.

The protein localises to the cell membrane. The polypeptide is Protein PsiE homolog (Bacillus velezensis (strain DSM 23117 / BGSC 10A6 / LMG 26770 / FZB42) (Bacillus amyloliquefaciens subsp. plantarum)).